A 1331-amino-acid chain; its full sequence is DNA-directed RNA polymerase subunit beta' (1331 aa).

Zn(2+) is bound by residues cysteine 60, cysteine 62, cysteine 75, and cysteine 78. Residues aspartate 535, aspartate 537, and aspartate 539 each contribute to the Mg(2+) site. The Zn(2+) site is built by cysteine 902, cysteine 979, cysteine 986, and cysteine 989.

Belongs to the RNA polymerase beta' chain family. In terms of assembly, the RNAP catalytic core consists of 2 alpha, 1 beta, 1 beta' and 1 omega subunit. When a sigma factor is associated with the core the holoenzyme is formed, which can initiate transcription. Mg(2+) is required as a cofactor. Requires Zn(2+) as cofactor.

The enzyme catalyses RNA(n) + a ribonucleoside 5'-triphosphate = RNA(n+1) + diphosphate. In terms of biological role, DNA-dependent RNA polymerase catalyzes the transcription of DNA into RNA using the four ribonucleoside triphosphates as substrates. This is DNA-directed RNA polymerase subunit beta' from Corynebacterium aurimucosum (strain ATCC 700975 / DSM 44827 / CIP 107346 / CN-1) (Corynebacterium nigricans).